The following is a 467-amino-acid chain: Cruzipain (467 aa).

The N-terminal stretch at 1–18 is a signal peptide; it reads MSGWARALLLAAVLVVMA. A propeptide spans 19 to 122 (activation peptide); that stretch reads CLVPAATASL…RVPVKVEVVG (104 aa). 3 disulfides stabilise this stretch: C144–C185, C178–C223, and C277–C325. The active site involves C147. N-linked (GlcNAc...) asparagine glycosylation is present at N169. H284 is an active-site residue. The N-linked (GlcNAc...) asparagine glycan is linked to N292. N304 is an active-site residue. Positions 333–355 are disordered; the sequence is SAVVGGPGPTPEPTTTTTTSAPG. Positions 345-354 are enriched in low complexity; that stretch reads PTTTTTTSAP. N-linked (GlcNAc...) asparagine glycosylation is present at N377.

It belongs to the peptidase C1 family.

It catalyses the reaction Broad endopeptidase specificity similar to that of cathepsin L.. Strongly inhibited by E-64 (L-trans-epoxysuccinylleucylamido(4-guanidino)butane), Leupeptin, and N-alpha-p-tosyl-L-lysine chloromethyl ketone. Its function is as follows. Hydrolyzes chromogenic peptides at the carboxyl Arg or Lys; requires at least one more amino acid, preferably Arg, Phe, Val or Leu, between the terminal Arg or Lys and the amino-blocking group. Functionally, the cysteine protease may play an important role in the development and differentiation of the parasites at several stages of their life cycle. This Trypanosoma cruzi protein is Cruzipain.